Reading from the N-terminus, the 251-residue chain is 2,3-bisphosphoglycerate-dependent phosphoglycerate mutase (251 aa).

Residues 13-20 (RHGESEWN), 26-27 (TG), arginine 65, 92-95 (ERHY), lysine 103, 119-120 (RR), and 186-187 (GN) each bind substrate. The active-site Tele-phosphohistidine intermediate is histidine 14. Residue glutamate 92 is the Proton donor/acceptor of the active site.

Belongs to the phosphoglycerate mutase family. BPG-dependent PGAM subfamily.

The enzyme catalyses (2R)-2-phosphoglycerate = (2R)-3-phosphoglycerate. It participates in carbohydrate degradation; glycolysis; pyruvate from D-glyceraldehyde 3-phosphate: step 3/5. In terms of biological role, catalyzes the interconversion of 2-phosphoglycerate and 3-phosphoglycerate. The polypeptide is 2,3-bisphosphoglycerate-dependent phosphoglycerate mutase (Rhodococcus opacus (strain B4)).